We begin with the raw amino-acid sequence, 366 residues long: ATP-dependent 6-phosphofructokinase (366 aa).

ATP contacts are provided by residues G16, 78-79 (RE), and 118-121 (GNGT). The segment at 74–94 (LGTSREKPFKPDPGEKDSEAG) is disordered. Over residues 77–94 (SREKPFKPDPGEKDSEAG) the composition is skewed to basic and acidic residues. N119 is a binding site for Mg(2+). Substrate contacts are provided by residues 141 to 143 (TID), R178, 185 to 187 (MGH), E238, R282, and 288 to 291 (YLQR). D143 (proton acceptor) is an active-site residue.

This sequence belongs to the phosphofructokinase type A (PFKA) family. Mixed-substrate PFK group III subfamily. Homodimer or homotetramer. Mg(2+) is required as a cofactor.

It is found in the cytoplasm. The catalysed reaction is beta-D-fructose 6-phosphate + ATP = beta-D-fructose 1,6-bisphosphate + ADP + H(+). The protein operates within carbohydrate degradation; glycolysis; D-glyceraldehyde 3-phosphate and glycerone phosphate from D-glucose: step 3/4. Catalyzes the phosphorylation of D-fructose 6-phosphate to fructose 1,6-bisphosphate by ATP, the first committing step of glycolysis. The protein is ATP-dependent 6-phosphofructokinase of Spirochaeta thermophila (strain ATCC 49972 / DSM 6192 / RI 19.B1).